Here is a 170-residue protein sequence, read N- to C-terminus: Protein-export protein SecB (170 aa).

The protein belongs to the SecB family. As to quaternary structure, homotetramer, a dimer of dimers. One homotetramer interacts with 1 SecA dimer.

It localises to the cytoplasm. One of the proteins required for the normal export of preproteins out of the cell cytoplasm. It is a molecular chaperone that binds to a subset of precursor proteins, maintaining them in a translocation-competent state. It also specifically binds to its receptor SecA. This Xanthomonas campestris pv. campestris (strain 8004) protein is Protein-export protein SecB.